A 425-amino-acid chain; its full sequence is Probable isoprenylcysteine alpha-carbonyl methylesterase ICMEL1 (425 aa).

Basic and acidic residues predominate over residues 1-10 (MQVELADRAA). Positions 1-42 (MQVELADRAAARPSETGEAPPSSPAAAAAASAAAEDAPLLPG) are disordered. Positions 24 to 34 (PAAAAAASAAA) are enriched in low complexity. 2 helical membrane-spanning segments follow: residues 99–119 (FLAL…VVYY) and 154–174 (VVAF…GALL). Substrate-binding positions include 160-162 (GGA) and 231-233 (QSA). Residues Ser232, Asp334, and His366 contribute to the active site.

The protein belongs to the AB hydrolase superfamily. Isoprenylcysteine methylesterase family.

The protein resides in the endoplasmic reticulum membrane. The protein localises to the golgi apparatus membrane. It catalyses the reaction [protein]-C-terminal S-[(2E,6E)-farnesyl]-L-cysteine methyl ester + H2O = [protein]-C-terminal S-[(2E,6E)-farnesyl]-L-cysteine + methanol + H(+). Functionally, catalyzes the demethylation of isoprenylcysteine methylesters. This chain is Probable isoprenylcysteine alpha-carbonyl methylesterase ICMEL1 (IMCEL1), found in Oryza sativa subsp. japonica (Rice).